Here is an 89-residue protein sequence, read N- to C-terminus: Small ribosomal subunit protein uS14 (89 aa).

It belongs to the universal ribosomal protein uS14 family. In terms of assembly, part of the 30S ribosomal subunit. Contacts proteins S3 and S10.

Functionally, binds 16S rRNA, required for the assembly of 30S particles and may also be responsible for determining the conformation of the 16S rRNA at the A site. The protein is Small ribosomal subunit protein uS14 of Lacticaseibacillus casei (strain BL23) (Lactobacillus casei).